A 578-amino-acid polypeptide reads, in one-letter code: Peptidyl-prolyl cis-trans isomerase-like 2 (578 aa).

The 75-residue stretch at 40-114 folds into the U-box domain; sequence RRLPFNFCAA…SDSLGAGLSD (75 aa). The segment at 240–260 is disordered; it reads KAREQGGDVNRSSTALTKPTG. The PPIase cyclophilin-type domain occupies 321-475; sequence ATGFARMETN…NKILIKDIVI (155 aa). Residues 505-578 are disordered; it reads GTDDDKTTWT…GGGFGNFDNW (74 aa). Over residues 538–548 the composition is skewed to polar residues; the sequence is KTTTQQSTPTV. A compositionally biased stretch (acidic residues) spans 551-560; that stretch reads ADLEDVDTWE. Positions 569-578 are enriched in gly residues; the sequence is GGGFGNFDNW.

Belongs to the cyclophilin-type PPIase family. PPIL2 subfamily.

The protein localises to the nucleus. The catalysed reaction is [protein]-peptidylproline (omega=180) = [protein]-peptidylproline (omega=0). It catalyses the reaction S-ubiquitinyl-[E2 ubiquitin-conjugating enzyme]-L-cysteine + [acceptor protein]-L-lysine = [E2 ubiquitin-conjugating enzyme]-L-cysteine + N(6)-ubiquitinyl-[acceptor protein]-L-lysine.. Its pathway is protein modification; protein ubiquitination. May catalyze the cis-trans isomerization of proline imidic peptide bonds in oligopeptides thereby assisting the folding of proteins. May also function as a chaperone, playing a role in intracellular transport of proteins. May also have a protein ubiquitin ligase activity acting as an E3 ubiquitin protein ligase or as a ubiquitin-ubiquitin ligase promoting elongation of ubiquitin chains on proteins. This Gibberella zeae (strain ATCC MYA-4620 / CBS 123657 / FGSC 9075 / NRRL 31084 / PH-1) (Wheat head blight fungus) protein is Peptidyl-prolyl cis-trans isomerase-like 2 (CYP8).